We begin with the raw amino-acid sequence, 138 residues long: Proline-rich protein 34 (138 aa).

The segment covering 22 to 37 has biased composition (pro residues); that stretch reads SAPTSPPNPATRPAPG. Disordered regions lie at residues 22-55 and 81-107; these read SAPT…PTRG and APRL…SPAR.

The protein is Proline-rich protein 34 (PRR34) of Homo sapiens (Human).